Reading from the N-terminus, the 1290-residue chain is Alpha-factor-transporting ATPase (1290 aa).

Residues 1–25 (MNFLSFKTTKHYHIFRYVNIRNDYR) lie on the Cytoplasmic side of the membrane. Residues 26–46 (LLMIMIIGTVATGLVPAITSI) traverse the membrane as a helical segment. In terms of domain architecture, ABC transmembrane type-1 1 spans 27-319 (LMIMIIGTVA…TLHQIVVLQK (293 aa)). At 47–75 (LTGRVFDLLSVFVANGSHQGLYSQLVQRS) the chain is on the extracellular side. Asn61 carries an N-linked (GlcNAc...) asparagine glycan. The chain crosses the membrane as a helical span at residues 76 to 96 (MAVMALGAASVPVMWLSLTSW). Topologically, residues 97 to 150 (MHIGERQGFRIRSQILEAYLEEKPMEWYDNNEKLLGDFTQINRCVEELRSSSAE) are cytoplasmic. Residues 151 to 171 (ASAITFQNLVAICALLGTSFY) traverse the membrane as a helical segment. The Extracellular segment spans residues 172–173 (YS). The helical transmembrane segment at 174–194 (WSLTLIILCSSPIITFFAVVF) threads the bilayer. The Cytoplasmic segment spans residues 195-262 (SRMIHVYSEK…SCFFVAANAG (68 aa)). A helical transmembrane segment spans residues 263 to 283 (ILRFLTLTMFVQGFWFGSAMI). Residues 284-296 (KKGKLNINDVITC) are Extracellular-facing. Residues 297 to 317 (FHSCIMLGSTLNNTLHQIVVL) traverse the membrane as a helical segment. At 318–715 (QKGGVAMEKI…RMIKSIRYKK (398 aa)) the chain is on the cytoplasmic side. The ABC transporter 1 domain maps to 357-603 (LTFANVSFSY…PTTTFSTWYH (247 aa)). Residue 392–399 (GKSGSGKS) coordinates ATP. A helical transmembrane segment spans residues 716–736 (ILILGLLCSLIAGATNPVFSY). One can recognise an ABC transmembrane type-1 2 domain in the interval 717 to 1007 (LILGLLCSLI…LVSQIPDISR (291 aa)). The Extracellular segment spans residues 737–763 (TFSFLLEGIVPSTDGKTGSSHYLAKWS). The helical transmembrane segment at 764-784 (LLVLGVAAADGIFNFAKGFLL) threads the bilayer. At 785 to 838 (DCCSEYWVMDLRNEVMEKLTRKNMDWFSGENNKASEISALVLNDLRDLRSLVSE) the chain is on the cytoplasmic side. The helical transmembrane segment at 839-859 (FLSAMTSFVTVSTIGLIWALV) threads the bilayer. The Extracellular segment spans residues 860–865 (SGWKLS). Residues 866–886 (LVCISMFPLIIIFSAIYGGIL) form a helical membrane-spanning segment. Residues 887–945 (QKCETDYKTSVAQLENCLYQIVTNIKTIKCLQAEFHFQLTYHDLKIKMQQIASKRAIAT) are Cytoplasmic-facing. Residues 946-966 (GFGISMTNMIVMCIQAIIYYY) traverse the membrane as a helical segment. The Extracellular portion of the chain corresponds to 967-981 (GLKLVMIHEYTSKEM). The chain crosses the membrane as a helical span at residues 982–1002 (FTTFTLLLFTIMSCTSLVSQI). The Cytoplasmic segment spans residues 1003-1290 (PDISRGQRAA…LFQIVSNQSS (288 aa)). Lys1022 is covalently cross-linked (Glycyl lysine isopeptide (Lys-Gly) (interchain with G-Cter in ubiquitin)). Positions 1052 to 1287 (VSIQNLTFAY…RGELFQIVSN (236 aa)) constitute an ABC transporter 2 domain. 1087–1094 (GESGTGKS) lines the ATP pocket.

It belongs to the ABC transporter superfamily. Alpha-factor sex pheromone exporter (TC 3.A.1.206) family. Post-translationally, degraded via the ubiquitin system.

It is found in the membrane. The catalysed reaction is an [alpha-factor](in) + ATP + H2O = an [alpha-factor](out) + ADP + phosphate + H(+). In terms of biological role, STE6 is required in yeast MATA cells for production of A-factor pheromone. STE6 is involved in the transport of the farnesyl-derivation of the A-factor pheromone. This Saccharomyces cerevisiae (strain ATCC 204508 / S288c) (Baker's yeast) protein is Alpha-factor-transporting ATPase (STE6).